The chain runs to 226 residues: Insulin-like growth factor-binding protein 6 (226 aa).

The first 25 residues, 1-25 (MTWDGLPTQPLLMLLMLLFAAGSES), serve as a signal peptide directing secretion. The IGFBP N-terminal domain occupies 26–99 (ALAGCPGCGP…LIGQGRCQRA (74 aa)). 4 cysteine pairs are disulfide-bonded: C30-C33, C49-C55, C63-C76, and C70-C96. The segment at 92 to 148 (GQGRCQRARGPSEETTKESKPHGGASRPRDRDRQKNPRTSAAPIRPSPVQDGEMGPC) is disordered. Over residues 101–126 (GPSEETTKESKPHGGASRPRDRDRQK) the composition is skewed to basic and acidic residues. The Thyroglobulin type-1 domain occupies 145-220 (MGPCRRHLDS…SPDGQGSSQC (76 aa)). 3 disulfide bridges follow: C148–C176, C187–C198, and C200–C220. The interval 205–226 (GQPLPVSPDGQGSSQCSARSSG) is disordered. The span at 214-226 (GQGSSQCSARSSG) shows a compositional bias: polar residues.

Interacts (via C-terminal domain) with PHB2. Post-translationally, O-glycosylated.

The protein resides in the secreted. IGF-binding proteins prolong the half-life of the IGFs and have been shown to either inhibit or stimulate the growth promoting effects of the IGFs on cell culture. They alter the interaction of IGFs with their cell surface receptors. Activates the MAPK signaling pathway and induces cell migration. The polypeptide is Insulin-like growth factor-binding protein 6 (Igfbp6) (Rattus norvegicus (Rat)).